The primary structure comprises 309 residues: Taste receptor type 2 member 46 (309 aa).

Residue methionine 1 is a topological domain, extracellular. The chain crosses the membrane as a helical span at residues 2 to 22; sequence ITFLPIIFSILIVVTFVIGNF. The Cytoplasmic segment spans residues 23–46; that stretch reads ANGFIALVNSIEWFKRQKISFADQ. Residues 47-67 form a helical membrane-spanning segment; that stretch reads ILTALAVSRVGLLWVLVLNWY. The Extracellular portion of the chain corresponds to 68 to 86; it reads ATELNPAFNSIEVRITAYN. The helical transmembrane segment at 87–107 threads the bilayer; sequence VWAVINHFSNWLATSLSIFYL. At 108–126 the chain is on the cytoplasmic side; that stretch reads LKIANFSNLIFLHLKRRVK. Residues 127 to 147 traverse the membrane as a helical segment; sequence SVVLVILLGPLLFLVCHLFVI. Residues 148–178 are Extracellular-facing; sequence NMNQIIWTKEYEGNMTWKIKLRSAMYLSNTT. Residues asparagine 161 and asparagine 176 are each glycosylated (N-linked (GlcNAc...) asparagine). The helical transmembrane segment at 179–199 threads the bilayer; that stretch reads VTILANLVPFTLTLISFLLLI. The Cytoplasmic segment spans residues 200-229; sequence CSLCKHLKKMQLHGKGSQDPSMKVHIKALQ. A helical transmembrane segment spans residues 230 to 250; the sequence is TVTSFLLLCAIYFLSIIMSVW. Topologically, residues 251-259 are extracellular; the sequence is SFESLENKP. Residues 260-280 form a helical membrane-spanning segment; it reads VFMFCEAIAFSYPSTHPFILI. Over 281–309 the chain is Cytoplasmic; sequence WGNKKLKQTFLSVLWHVRYWVKGEKPSSS.

The protein belongs to the G-protein coupled receptor T2R family. As to expression, expressed in subsets of taste receptor cells of the tongue and exclusively in gustducin-positive cells. Expressed on ciliated airway epithelium.

Its subcellular location is the membrane. The protein resides in the cell projection. It is found in the cilium membrane. Its function is as follows. Receptor that may play a role in the perception of bitterness and is gustducin-linked. May play a role in sensing the chemical composition of the gastrointestinal content. The activity of this receptor may stimulate alpha gustducin, mediate PLC-beta-2 activation and lead to the gating of TRPM5. In airway epithelial cells, binding of bitter compounds increases the intracellular calcium ion concentration and stimulates ciliary beat frequency. This Homo sapiens (Human) protein is Taste receptor type 2 member 46 (TAS2R46).